Here is a 102-residue protein sequence, read N- to C-terminus: Large ribosomal subunit protein bL21 (102 aa).

It belongs to the bacterial ribosomal protein bL21 family. Part of the 50S ribosomal subunit. Contacts protein L20.

Its function is as follows. This protein binds to 23S rRNA in the presence of protein L20. The chain is Large ribosomal subunit protein bL21 from Bacillus velezensis (strain DSM 23117 / BGSC 10A6 / LMG 26770 / FZB42) (Bacillus amyloliquefaciens subsp. plantarum).